The following is a 502-amino-acid chain: Interleukin-17 receptor B (502 aa).

Positions 1–17 are cleaved as a signal peptide; the sequence is MSLVLLSLAALCRSAVP. The Extracellular portion of the chain corresponds to 18–292; sequence REPTVQCGSE…NKSKPGGWLP (275 aa). 6 N-linked (GlcNAc...) asparagine glycosylation sites follow: Asn67, Asn103, Asn156, Asn183, Asn197, and Asn283. Residues 293–313 traverse the membrane as a helical segment; it reads LLLLSLLVATWVLVAGIYLMW. The Cytoplasmic segment spans residues 314–502; it reads RHERIKKTSF…QACHDGCCSL (189 aa). The region spanning 331-477 is the SEFIR domain; it reads PIKVLVVYPS…LMKDATAFCA (147 aa).

Interacts with DAZAP2. Interacts with TRAF3IP2. In terms of tissue distribution, expressed in several endocrine tissues, mostly in fetal and adult liver, kidney, pancreas, testis, colon, brain and small intestine; not detected in peripheral blood leukocytes, lymphoid organs, and most cell lines.

It is found in the cell membrane. Its subcellular location is the secreted. In terms of biological role, receptor for the pro-inflammatory cytokines IL17B and IL17E. May play a role in controlling the growth and/or differentiation of hematopoietic cells. This is Interleukin-17 receptor B (IL17RB) from Homo sapiens (Human).